The chain runs to 1218 residues: Coatomer subunit alpha-2 (1218 aa).

WD repeat units follow at residues 7 to 48 (TKSN…DRFD), 49 to 88 (EHEG…CLFT), 91 to 132 (GHLD…SVLT), 133 to 172 (GHNH…KKSA), 202 to 241 (GHDR…AWEV), 246 to 285 (GHMN…GIQT), 288 to 326 (REHD…PAFA), and 363 to 404 (SLNQ…VGRS). The interval 826 to 849 (NRGAVDEEEEDVEGDWGEGLDKFD) is disordered. Residues 831–843 (DEEEEDVEGDWGE) are compositionally biased toward acidic residues.

In terms of assembly, oligomeric complex that consists of at least the alpha, beta, beta', gamma, delta, epsilon and zeta subunits.

The protein localises to the cytoplasm. It is found in the golgi apparatus membrane. Its subcellular location is the cytoplasmic vesicle. It localises to the COPI-coated vesicle membrane. The coatomer is a cytosolic protein complex that binds to dilysine motifs and reversibly associates with Golgi non-clathrin-coated vesicles, which further mediate biosynthetic protein transport from the ER, via the Golgi up to the trans Golgi network. Coatomer complex is required for budding from Golgi membranes, and is essential for the retrograde Golgi-to-ER transport of dilysine-tagged proteins. This chain is Coatomer subunit alpha-2, found in Arabidopsis thaliana (Mouse-ear cress).